Reading from the N-terminus, the 311-residue chain is Cytochrome f (311 aa).

The N-terminal stretch at 1–27 (MRRHLSLLIGSLVLGLSLLIAPAASWA) is a signal peptide. Heme contacts are provided by Y28, C48, C51, and H52. The helical transmembrane segment at 277–297 (IYGLLAFFAAVALAQIMLVLK) threads the bilayer.

The protein belongs to the cytochrome f family. In terms of assembly, the 4 large subunits of the cytochrome b6-f complex are cytochrome b6, subunit IV (17 kDa polypeptide, PetD), cytochrome f and the Rieske protein, while the 4 small subunits are PetG, PetL, PetM and PetN. The complex functions as a dimer. Heme is required as a cofactor.

The protein resides in the cellular thylakoid membrane. Component of the cytochrome b6-f complex, which mediates electron transfer between photosystem II (PSII) and photosystem I (PSI), cyclic electron flow around PSI, and state transitions. This is Cytochrome f from Parasynechococcus marenigrum (strain WH8102).